Here is a 317-residue protein sequence, read N- to C-terminus: Ribosomal protein L11 methyltransferase (317 aa).

Residues Thr-158, Gly-179, Asp-201, and Asn-244 each contribute to the S-adenosyl-L-methionine site.

The protein belongs to the methyltransferase superfamily. PrmA family.

The protein localises to the cytoplasm. The catalysed reaction is L-lysyl-[protein] + 3 S-adenosyl-L-methionine = N(6),N(6),N(6)-trimethyl-L-lysyl-[protein] + 3 S-adenosyl-L-homocysteine + 3 H(+). Methylates ribosomal protein L11. The protein is Ribosomal protein L11 methyltransferase of Streptococcus pyogenes serotype M12 (strain MGAS2096).